A 178-amino-acid chain; its full sequence is ATP synthase subunit delta (178 aa).

It belongs to the ATPase delta chain family. F-type ATPases have 2 components, F(1) - the catalytic core - and F(0) - the membrane proton channel. F(1) has five subunits: alpha(3), beta(3), gamma(1), delta(1), epsilon(1). F(0) has three main subunits: a(1), b(2) and c(10-14). The alpha and beta chains form an alternating ring which encloses part of the gamma chain. F(1) is attached to F(0) by a central stalk formed by the gamma and epsilon chains, while a peripheral stalk is formed by the delta and b chains.

The protein localises to the cell inner membrane. Functionally, f(1)F(0) ATP synthase produces ATP from ADP in the presence of a proton or sodium gradient. F-type ATPases consist of two structural domains, F(1) containing the extramembraneous catalytic core and F(0) containing the membrane proton channel, linked together by a central stalk and a peripheral stalk. During catalysis, ATP synthesis in the catalytic domain of F(1) is coupled via a rotary mechanism of the central stalk subunits to proton translocation. This protein is part of the stalk that links CF(0) to CF(1). It either transmits conformational changes from CF(0) to CF(1) or is implicated in proton conduction. This Pseudomonas entomophila (strain L48) protein is ATP synthase subunit delta.